A 430-amino-acid polypeptide reads, in one-letter code: tRNA(Ile)-lysidine synthase (430 aa).

21–26 is an ATP binding site; the sequence is SGGLDS.

Belongs to the tRNA(Ile)-lysidine synthase family.

Its subcellular location is the cytoplasm. The catalysed reaction is cytidine(34) in tRNA(Ile2) + L-lysine + ATP = lysidine(34) in tRNA(Ile2) + AMP + diphosphate + H(+). In terms of biological role, ligates lysine onto the cytidine present at position 34 of the AUA codon-specific tRNA(Ile) that contains the anticodon CAU, in an ATP-dependent manner. Cytidine is converted to lysidine, thus changing the amino acid specificity of the tRNA from methionine to isoleucine. The protein is tRNA(Ile)-lysidine synthase of Salmonella paratyphi B (strain ATCC BAA-1250 / SPB7).